A 50-amino-acid polypeptide reads, in one-letter code: Defensin-like protein 1 (50 aa).

4 disulfides stabilise this stretch: C3–C50, C14–C35, C20–C44, and C24–C46.

Belongs to the DEFL family.

Its subcellular location is the secreted. Its function is as follows. Possesses antimicrobial activity sensitive to inorganic cations. Has no inhibitory effect on insect gut alpha-amylase. Induces potential changes in fungal membranes and increased K+ efflux and Ca(2+) uptake. Interacts with sphingolipids and ergosterols found in fungal plasma membranes. The polypeptide is Defensin-like protein 1 (Dahlia merckii (Bedding dahlia)).